Consider the following 239-residue polypeptide: Zwei Ig domain protein zig-7 (239 aa).

The N-terminal stretch at methionine 1–alanine 21 is a signal peptide. N-linked (GlcNAc...) asparagine glycosylation is present at asparagine 43. The Ig-like C2-type domain occupies proline 145–cysteine 211. A disulfide bridge links cysteine 164 with cysteine 211.

In terms of tissue distribution, expressed in body wall muscles.

Its subcellular location is the secreted. In terms of biological role, probably not involved in maintaining the position of ASI and ASH head neuron cell bodies and ventral nerve cord axons of PVQ, PVP, RMEV, AVK and HSN neurons. This chain is Zwei Ig domain protein zig-7, found in Caenorhabditis elegans.